Consider the following 101-residue polypeptide: Cilia- and flagella-associated protein 141 (101 aa).

As to quaternary structure, microtubule inner protein component of sperm flagellar doublet microtubules. As to expression, expressed in airway epithelial cells.

Its subcellular location is the cytoplasm. It is found in the cytoskeleton. The protein localises to the cilium axoneme. It localises to the flagellum axoneme. Functionally, microtubule inner protein (MIP) part of the dynein-decorated doublet microtubules (DMTs) in cilia axoneme, which is required for motile cilia beating. The chain is Cilia- and flagella-associated protein 141 from Homo sapiens (Human).